Consider the following 287-residue polypeptide: Cell wall-binding protein YocH (287 aa).

The first 25 residues, Met1 to Ala25, serve as a signal peptide directing secretion. LysM domains are found at residues Lys26–Ile69 and Gly78–Val121. Residues Thr130–Ala143 are compositionally biased toward low complexity. Positions Thr130–Lys193 are disordered. The segment covering Gln165 to Ala181 has biased composition (basic and acidic residues). Positions Val182–Lys193 are enriched in polar residues.

The protein resides in the secreted. Its subcellular location is the cell wall. This Bacillus subtilis (strain 168) protein is Cell wall-binding protein YocH (yocH).